A 223-amino-acid chain; its full sequence is Probable glutathione S-transferase (223 aa).

One can recognise a GST N-terminal domain in the interval 2–81 (AEVKLLGFWY…YIDETFEGPS (80 aa)). Residues Ser-12, Lys-39, Val-53, and 65 to 66 (ES) each bind glutathione. Residues 86-212 (DPYDRALARF…ELLAFFRARF (127 aa)) enclose the GST C-terminal domain.

Belongs to the GST superfamily. HSP26 family. As to expression, root tip-specific expression.

It catalyses the reaction RX + glutathione = an S-substituted glutathione + a halide anion + H(+). This chain is Probable glutathione S-transferase, found in Nicotiana tabacum (Common tobacco).